The chain runs to 406 residues: 3-oxoacyl-[acyl-carrier-protein] synthase 1 (406 aa).

Residues Met-1 to Arg-403 form the Ketosynthase family 3 (KS3) domain. Catalysis depends on for beta-ketoacyl synthase activity residues Cys-162, His-297, and His-332.

The protein belongs to the thiolase-like superfamily. Beta-ketoacyl-ACP synthases family. As to quaternary structure, homodimer.

It is found in the cytoplasm. It carries out the reaction a fatty acyl-[ACP] + malonyl-[ACP] + H(+) = a 3-oxoacyl-[ACP] + holo-[ACP] + CO2. The enzyme catalyses (3Z)-decenoyl-[ACP] + malonyl-[ACP] + H(+) = 3-oxo-(5Z)-dodecenoyl-[ACP] + holo-[ACP] + CO2. The protein operates within lipid metabolism; fatty acid biosynthesis. In terms of biological role, involved in the type II fatty acid elongation cycle. Catalyzes the elongation of a wide range of acyl-ACP by the addition of two carbons from malonyl-ACP to an acyl acceptor. Can also use unsaturated fatty acids. Catalyzes a key reaction in unsaturated fatty acid (UFA) synthesis, the elongation of the cis-3-decenoyl-ACP produced by FabA. The polypeptide is 3-oxoacyl-[acyl-carrier-protein] synthase 1 (fabB) (Haemophilus influenzae (strain ATCC 51907 / DSM 11121 / KW20 / Rd)).